The chain runs to 1282 residues: Indigoidine synthase (1282 aa).

Positions 24–379 (AQRVAEHPEA…GGIQLARGYL (356 aa)) are adenylation. Residues 937-1012 (APRTETEKEI…KLARRLEREV (76 aa)) enclose the Carrier domain. An O-(pantetheine 4'-phosphoryl)serine modification is found at Ser-972. Positions 1030–1138 (RPVICWPGLG…APGSPKVRAE (109 aa)) are thioesterase.

This sequence belongs to the ATP-dependent AMP-binding enzyme family. It depends on pantetheine 4'-phosphate as a cofactor.

The catalysed reaction is 2 FMN + 2 L-glutamine + 2 ATP + O2 = indigoidine + 2 FMNH2 + 2 AMP + 2 diphosphate + 2 H2O. It carries out the reaction FMN + L-glutamine + ATP = 3-amino-1,5-dihydropyridine-2,6-dione + FMNH2 + AMP + diphosphate. It catalyses the reaction 2 3-amino-1,5-dihydropyridine-2,6-dione + O2 = indigoidine + 2 H2O. The protein operates within pigment biosynthesis. Nonribosomal peptide synthetase involved in the biosynthesis of the blue pigment indigoidine. Catalyzes the synthesis of the blue pigment using L-Gln as a substrate. Two glutamine molecules are cyclized and oxidized to form indigoidine. This Streptomyces lavendulae protein is Indigoidine synthase.